Here is a 464-residue protein sequence, read N- to C-terminus: Protein FAM90A8 (464 aa).

Disordered stretches follow at residues 1-42, 69-389, and 415-437; these read MMAR…DPRL, VPAT…HDGA, and HSPE…SEAP. Composition is skewed to basic and acidic residues over residues 74–89 and 97–114; these read GKKE…KPRG and NKDK…DPQR. Residues 180–197 show a composition bias toward low complexity; it reads LASLSPLRKASLSSSSSL.

This sequence belongs to the FAM90 family.

The protein is Protein FAM90A8 (FAM90A8) of Homo sapiens (Human).